The chain runs to 88 residues: Small ribosomal subunit protein bS16c (88 aa).

Belongs to the bacterial ribosomal protein bS16 family.

The protein localises to the plastid. The protein resides in the chloroplast. The protein is Small ribosomal subunit protein bS16c of Oenothera elata subsp. hookeri (Hooker's evening primrose).